A 153-amino-acid polypeptide reads, in one-letter code: Natriuretic peptides A (153 aa).

The signal sequence occupies residues 1-25; it reads MGPFSTITVSFLFCLAFWHPDQIGA. 2 propeptides span residues 26–123 and 93–103; these read NPVY…TAPR and DGEALGRSTWE. The disordered stretch occupies residues 54 to 101; it reads EDEAVPPQALSEQSDEAGAALSPLPEVPPWTGEVSPAQRDGEALGRST. Phosphoserine is present on Ser129. Cys130 and Cys146 are disulfide-bonded. The interval 147–151 is important for degradation of atrial natriuretic peptide by IDE; that stretch reads NSFRY.

Belongs to the natriuretic peptide family. Homodimer; disulfide-linked antiparallel dimer. Post-translationally, the precursor molecule is proteolytically cleaved by CORIN at Arg-123 to produce the atrial natriuretic peptide. Undergoes further proteolytic cleavage by unknown proteases to give rise to long-acting natriuretic peptide, vessel dilator and kaliuretic peptide. Additional processing gives rise to the auriculin and atriopeptin peptides. In the kidneys, alternative processing by an unknown protease results in the peptide urodilatin. In terms of processing, cleavage by MME initiates degradation of the factor and thereby regulates its activity. Degradation by IDE results in reduced activation of NPR1 (in vitro). During IDE degradation, the resulting products can temporarily stimulate NPR2 to produce cGMP, before the fragments are completely degraded and inactivated by IDE (in vitro). Degraded by IDE. Post-translationally, phosphorylation on Ser-129 decreases vasorelaxant activity.

The protein resides in the secreted. The protein localises to the perikaryon. It localises to the cell projection. Its function is as follows. Hormone that plays a key role in mediating cardio-renal homeostasis, and is involved in vascular remodeling and regulating energy metabolism. Acts by specifically binding and stimulating NPR1 to produce cGMP, which in turn activates effector proteins, such as PRKG1, that drive various biological responses. Regulates vasodilation, natriuresis, diuresis and aldosterone synthesis and is therefore essential for regulating blood pressure, controlling the extracellular fluid volume and maintaining the fluid-electrolyte balance. Also involved in inhibiting cardiac remodeling and cardiac hypertrophy by inducing cardiomyocyte apoptosis and attenuating the growth of cardiomyocytes and fibroblasts. Plays a role in female pregnancy by promoting trophoblast invasion and spiral artery remodeling in uterus, and thus prevents pregnancy-induced hypertension. In adipose tissue, acts in various cGMP- and PKG-dependent pathways to regulate lipid metabolism and energy homeostasis. This includes up-regulating lipid metabolism and mitochondrial oxygen utilization by activating the AMP-activated protein kinase (AMPK), and increasing energy expenditure by acting via MAPK11 to promote the UCP1-dependent thermogenesis of brown adipose tissue. Binds the clearance receptor NPR3 which removes the hormone from circulation. Functionally, may have a role in cardio-renal homeostasis through regulation of natriuresis, diuresis, vasodilation, and inhibiting aldosterone synthesis. In vitro, promotes the production of cGMP and induces vasodilation. May promote natriuresis, at least in part, by enhancing prostaglandin E2 synthesis resulting in the inhibition of renal Na+-K+-ATPase. However reports on the involvement of this peptide in mammal blood volume and blood pressure homeostasis are conflicting; according to a report, in vivo it is not sufficient to activate cGMP and does not inhibit collecting duct transport nor effect diuresis and natriuresis. Appears to bind to specific receptors that are distinct from the receptors bound by atrial natriuretic peptide and vessel dilator. Possibly enhances protein excretion in urine by decreasing proximal tubular protein reabsorption. In terms of biological role, may have a role in cardio-renal homeostasis through regulation of natriuresis, diuresis, and vasodilation. In vitro, promotes the production of cGMP and induces vasodilation. May promote natriuresis, at least in part, by enhancing prostaglandin E2 synthesis resulting in the inhibition of renal Na+-K+-ATPase. However reports on the involvement of this peptide in mammal blood volume and blood pressure homeostasis are conflicting; according to a report it is not sufficient to activate cGMP and does not inhibit collecting duct transport nor effect diuresis and natriuresis. Appears to bind to specific receptors that are distinct from the receptors bound by the atrial natriuretic and long-acting natriuretic peptides. Possibly functions in protein excretion in urine by maintaining the integrity of the proximal tubules and enhancing protein excretion by decreasing proximal tubular protein reabsorption. May have a role in cardio-renal homeostasis through regulation of diuresis and inhibiting aldosterone synthesis. In vitro, promotes the production of cGMP and induces vasodilation. May promote natriuresis, at least in part, by enhancing prostaglandin E2 synthesis resulting in the inhibition of renal Na+-K+-ATPase. May have a role in potassium excretion but not sodium excretion (natriuresis). Possibly enhances protein excretion in urine by decreasing proximal tubular protein reabsorption. Its function is as follows. Hormone produced in the kidneys that appears to be important for maintaining cardio-renal homeostasis. Mediates vasodilation, natriuresis and diuresis primarily in the renal system, in order to maintain the extracellular fluid volume and control the fluid-electrolyte balance. Specifically binds and stimulates cGMP production by renal transmembrane receptors, likely NPR1. Urodilatin not ANP, may be the natriuretic peptide responsible for the regulation of sodium and water homeostasis in the kidney. Functionally, may have a role in cardio-renal homeostasis through regulation of natriuresis and vasodilation. In vivo promotes natriuresis and in vitro, vasodilates renal artery strips. In terms of biological role, may have a role in cardio-renal homeostasis through regulation of regulation of natriuresis and vasodilation. In vivo promotes natriuresis. In vitro, vasodilates intestinal smooth muscle but not smooth muscle strips. May have a role in cardio-renal homeostasis through regulation of natriuresis and vasodilation. In vivo promotes natriuresis. In vitro, selectively vasodilates intestinal and vascular smooth muscle strips. Its function is as follows. May have a role in cardio-renal homeostasis through regulation of natriuresis and vasodilation. In vivo promotes natriuresis. In vitro, selectively vasodilates intestinal smooth muscle but not vascular smooth muscle strips. This Oryctolagus cuniculus (Rabbit) protein is Natriuretic peptides A (NPPA).